The sequence spans 1303 residues: Phosphoribosylformylglycinamidine synthase (1303 aa).

ATP is bound by residues 308 to 319 and Ala-679; that span reads GASTGSGGEIRD. Mg(2+)-binding residues include Glu-719, Asn-723, and Asp-892. Residues 1003-1023 form a disordered region; the sequence is LRDNPACADQEHEAKKDNSDP. Over residues 1011 to 1021 the composition is skewed to basic and acidic residues; it reads DQEHEAKKDNS. The Glutamine amidotransferase type-1 domain occupies 1050 to 1303; that stretch reads MAILREQGVN…MFQNARKNIG (254 aa). Residue Cys-1143 is the Nucleophile of the active site. Active-site residues include His-1268 and Glu-1270.

This sequence in the N-terminal section; belongs to the FGAMS family. In terms of assembly, monomer.

It is found in the cytoplasm. It catalyses the reaction N(2)-formyl-N(1)-(5-phospho-beta-D-ribosyl)glycinamide + L-glutamine + ATP + H2O = 2-formamido-N(1)-(5-O-phospho-beta-D-ribosyl)acetamidine + L-glutamate + ADP + phosphate + H(+). Its pathway is purine metabolism; IMP biosynthesis via de novo pathway; 5-amino-1-(5-phospho-D-ribosyl)imidazole from N(2)-formyl-N(1)-(5-phospho-D-ribosyl)glycinamide: step 1/2. In terms of biological role, phosphoribosylformylglycinamidine synthase involved in the purines biosynthetic pathway. Catalyzes the ATP-dependent conversion of formylglycinamide ribonucleotide (FGAR) and glutamine to yield formylglycinamidine ribonucleotide (FGAM) and glutamate. In Aliivibrio fischeri (strain ATCC 700601 / ES114) (Vibrio fischeri), this protein is Phosphoribosylformylglycinamidine synthase.